The chain runs to 195 residues: UDP-N-acetylbacillosamine N-acetyltransferase (195 aa).

Residues 13–15 (SGH), 35–36 (DD), and glycine 56 each bind substrate. Histidine 125 acts as the Proton acceptor in catalysis. Positions 134, 155, and 173 each coordinate acetyl-CoA.

It belongs to the transferase hexapeptide repeat family. In terms of assembly, homotrimer.

The enzyme catalyses UDP-N-acetylbacillosamine + acetyl-CoA = UDP-N,N'-diacetylbacillosamine + CoA + H(+). The protein operates within protein modification; protein glycosylation. In terms of biological role, acetyltransferase that modifies the UDP-4-amino-sugar to form UDP-N,N'-diacetylbacillosamine in the N-linked protein glycosylation pathway. This is UDP-N-acetylbacillosamine N-acetyltransferase (pglD) from Campylobacter jejuni subsp. jejuni serotype O:2 (strain ATCC 700819 / NCTC 11168).